Reading from the N-terminus, the 281-residue chain is Pantothenate synthetase (281 aa).

30–37 (MGALHHGH) is a binding site for ATP. His37 acts as the Proton donor in catalysis. Gln61 provides a ligand contact to (R)-pantoate. Residue Gln61 participates in beta-alanine binding. 147–150 (GEKD) is an ATP binding site. Residue Gln153 participates in (R)-pantoate binding. ATP-binding positions include Leu176 and 184-187 (SSSR).

The protein belongs to the pantothenate synthetase family. In terms of assembly, homodimer.

The protein localises to the cytoplasm. It catalyses the reaction (R)-pantoate + beta-alanine + ATP = (R)-pantothenate + AMP + diphosphate + H(+). The protein operates within cofactor biosynthesis; (R)-pantothenate biosynthesis; (R)-pantothenate from (R)-pantoate and beta-alanine: step 1/1. Its function is as follows. Catalyzes the condensation of pantoate with beta-alanine in an ATP-dependent reaction via a pantoyl-adenylate intermediate. In Bartonella bacilliformis (strain ATCC 35685 / KC583 / Herrer 020/F12,63), this protein is Pantothenate synthetase.